A 191-amino-acid polypeptide reads, in one-letter code: Leucyl/phenylalanyl-tRNA--protein transferase (191 aa).

The protein belongs to the L/F-transferase family.

The protein localises to the cytoplasm. It catalyses the reaction N-terminal L-lysyl-[protein] + L-leucyl-tRNA(Leu) = N-terminal L-leucyl-L-lysyl-[protein] + tRNA(Leu) + H(+). The catalysed reaction is N-terminal L-arginyl-[protein] + L-leucyl-tRNA(Leu) = N-terminal L-leucyl-L-arginyl-[protein] + tRNA(Leu) + H(+). It carries out the reaction L-phenylalanyl-tRNA(Phe) + an N-terminal L-alpha-aminoacyl-[protein] = an N-terminal L-phenylalanyl-L-alpha-aminoacyl-[protein] + tRNA(Phe). Functions in the N-end rule pathway of protein degradation where it conjugates Leu, Phe and, less efficiently, Met from aminoacyl-tRNAs to the N-termini of proteins containing an N-terminal arginine or lysine. This is Leucyl/phenylalanyl-tRNA--protein transferase from Herpetosiphon aurantiacus (strain ATCC 23779 / DSM 785 / 114-95).